We begin with the raw amino-acid sequence, 434 residues long: Histidinol dehydrogenase (434 aa).

NAD(+)-binding residues include Tyr130, Gln188, and Asn211. Residues Ser237, Gln259, and His262 each coordinate substrate. Gln259 and His262 together coordinate Zn(2+). Active-site proton acceptor residues include Glu326 and His327. The substrate site is built by His327, Asp360, Glu414, and His419. Asp360 is a Zn(2+) binding site. His419 serves as a coordination point for Zn(2+).

It belongs to the histidinol dehydrogenase family. Homodimer. It depends on Zn(2+) as a cofactor.

The catalysed reaction is L-histidinol + 2 NAD(+) + H2O = L-histidine + 2 NADH + 3 H(+). Its pathway is amino-acid biosynthesis; L-histidine biosynthesis; L-histidine from 5-phospho-alpha-D-ribose 1-diphosphate: step 9/9. Catalyzes the sequential NAD-dependent oxidations of L-histidinol to L-histidinaldehyde and then to L-histidine. In Salmonella choleraesuis (strain SC-B67), this protein is Histidinol dehydrogenase.